Consider the following 103-residue polypeptide: Histone H4.1 (103 aa).

A compositionally biased stretch (gly residues) spans 1 to 14 (MSGRGKGGKGLGKG). The interval 1–20 (MSGRGKGGKGLGKGGAKRHR) is disordered. K6 is subject to N6-acetyl-N6-methyllysine; alternate. 3 positions are modified to N6-methyllysine; alternate: K6, K9, and K13. K13 is modified (N6-acetyl-N6-methyllysine; alternate). A DNA-binding region spans residues 17–21 (KRHRK). The residue at position 92 (K92) is an N6-glutaryllysine.

It belongs to the histone H4 family. The nucleosome is a histone octamer containing two molecules each of H2A, H2B, H3 and H4 assembled in one H3-H4 heterotetramer and two H2A-H2B heterodimers. The octamer wraps approximately 147 bp of DNA. Post-translationally, glutarylation at Lys-92 (H4K91glu) destabilizes nucleosomes by promoting dissociation of the H2A-H2B dimers from nucleosomes.

The protein localises to the nucleus. The protein resides in the chromosome. In terms of biological role, core component of nucleosome. Nucleosomes wrap and compact DNA into chromatin, limiting DNA accessibility to the cellular machineries which require DNA as a template. Histones thereby play a central role in transcription regulation, DNA repair, DNA replication and chromosomal stability. DNA accessibility is regulated via a complex set of post-translational modifications of histones, also called histone code, and nucleosome remodeling. In Eremothecium gossypii (strain ATCC 10895 / CBS 109.51 / FGSC 9923 / NRRL Y-1056) (Yeast), this protein is Histone H4.1 (HHF1).